The sequence spans 424 residues: Histidine--tRNA ligase (424 aa).

This sequence belongs to the class-II aminoacyl-tRNA synthetase family. In terms of assembly, homodimer.

Its subcellular location is the cytoplasm. It catalyses the reaction tRNA(His) + L-histidine + ATP = L-histidyl-tRNA(His) + AMP + diphosphate + H(+). This is Histidine--tRNA ligase from Salmonella dublin (strain CT_02021853).